The chain runs to 544 residues: Methionine--tRNA ligase 1 (544 aa).

Positions 10–20 (PYANGSLHLGH) match the 'HIGH' region motif. Zn(2+) is bound by residues cysteine 141, cysteine 144, cysteine 153, and cysteine 156. A 'KMSKS' region motif is present at residues 329 to 333 (KLSTS). Threonine 332 serves as a coordination point for ATP.

Belongs to the class-I aminoacyl-tRNA synthetase family. MetG type 1 subfamily. Monomer. Zn(2+) serves as cofactor.

Its subcellular location is the cytoplasm. The enzyme catalyses tRNA(Met) + L-methionine + ATP = L-methionyl-tRNA(Met) + AMP + diphosphate. In terms of biological role, is required not only for elongation of protein synthesis but also for the initiation of all mRNA translation through initiator tRNA(fMet) aminoacylation. This chain is Methionine--tRNA ligase 1, found in Bacillus cereus (strain ATCC 10987 / NRS 248).